We begin with the raw amino-acid sequence, 282 residues long: Insulin-like growth factor-binding protein 7 (282 aa).

A signal peptide spans 1-26; sequence MERPSLRALLLGAAGLLLLLLPLSSS. The 87-residue stretch at 28-114 folds into the IGFBP N-terminal domain; that stretch reads SSDTCGPCEP…PGVSGVCVCK (87 aa). 7 disulfide bridges follow: cysteine 32-cysteine 57, cysteine 35-cysteine 59, cysteine 40-cysteine 60, cysteine 48-cysteine 63, cysteine 71-cysteine 87, cysteine 81-cysteine 111, and cysteine 120-cysteine 156. A Kazal-like domain is found at 105 to 158; it reads PGVSGVCVCKSRYPVCGSDGTTYPSGCQLRAASQRAESRGEKAITQVSKGTCEQ. One can recognise an Ig-like C2-type domain in the interval 160-264; sequence PSIVTPPKDI…GQASASAKIT (105 aa). The N-linked (GlcNAc...) asparagine glycan is linked to asparagine 171. Cysteine 181 and cysteine 248 are joined by a disulfide. At serine 239 the chain carries Phosphoserine; by FAM20C.

In terms of assembly, may interact with VPS24/CHMP3; the relevance of such interaction however remains unclear. Interacts with CD93; this interaction plays a role in endothelial cells angiogenesis. Post-translationally, N-glycosylated.

The protein localises to the secreted. Functionally, binds IGF1 and IGF2 with a relatively low affinity. Stimulates prostacyclin (PGI2) production. Stimulates cell adhesion. Acts as a ligand for CD93 to play a role in angiogenesis. The polypeptide is Insulin-like growth factor-binding protein 7 (IGFBP7) (Homo sapiens (Human)).